We begin with the raw amino-acid sequence, 23 residues long: Coenzyme PQQ synthesis protein A (23 aa).

The segment at residues 15–19 (EVTLY) is a cross-link (pyrroloquinoline quinone (Glu-Tyr)).

The protein belongs to the PqqA family.

Its pathway is cofactor biosynthesis; pyrroloquinoline quinone biosynthesis. Functionally, required for coenzyme pyrroloquinoline quinone (PQQ) biosynthesis. PQQ is probably formed by cross-linking a specific glutamate to a specific tyrosine residue and excising these residues from the peptide. The sequence is that of Coenzyme PQQ synthesis protein A from Colwellia psychrerythraea (strain 34H / ATCC BAA-681) (Vibrio psychroerythus).